The following is a 171-amino-acid chain: Shikimate kinase (171 aa).

ATP is bound at residue 14–19; the sequence is GAGKST. Ser-18 contacts Mg(2+). Residues Asp-36, Arg-60, and Gly-82 each contribute to the substrate site. Arg-120 lines the ATP pocket. Arg-139 serves as a coordination point for substrate. Gln-156 provides a ligand contact to ATP.

It belongs to the shikimate kinase family. In terms of assembly, monomer. Requires Mg(2+) as cofactor.

It is found in the cytoplasm. The enzyme catalyses shikimate + ATP = 3-phosphoshikimate + ADP + H(+). It participates in metabolic intermediate biosynthesis; chorismate biosynthesis; chorismate from D-erythrose 4-phosphate and phosphoenolpyruvate: step 5/7. Catalyzes the specific phosphorylation of the 3-hydroxyl group of shikimic acid using ATP as a cosubstrate. This Pseudoalteromonas atlantica (strain T6c / ATCC BAA-1087) protein is Shikimate kinase.